The primary structure comprises 222 residues: Prolactin-2C5 (222 aa).

The N-terminal stretch at 1 to 29 (MLPSLIQPCSWILLLLLVNSSLLWKNVAS) is a signal peptide. Cysteines 33 and 40 form a disulfide. Residue Asn-57 is glycosylated (N-linked (GlcNAc...) asparagine). 2 disulfides stabilise this stretch: Cys-87-Cys-197 and Cys-214-Cys-222.

Belongs to the somatotropin/prolactin family. N-glycosylated and sialylated. Expressed in placenta (at protein level). Expressed in the tail hair follicle, with highest expression detected in the keratinocytes of the outer root sheath. Expressed in ear skin with lesser amounts in small intestine. Not detected in brain at 18 dpc, postnatal day 25 or postnatal day 55.

It localises to the secreted. The protein is Prolactin-2C5 of Mus musculus (Mouse).